Reading from the N-terminus, the 548-residue chain is Glucose-6-phosphate isomerase (548 aa).

Glutamate 355 functions as the Proton donor in the catalytic mechanism. Residues histidine 386 and lysine 514 contribute to the active site.

This sequence belongs to the GPI family.

Its subcellular location is the cytoplasm. It catalyses the reaction alpha-D-glucose 6-phosphate = beta-D-fructose 6-phosphate. It functions in the pathway carbohydrate biosynthesis; gluconeogenesis. Its pathway is carbohydrate degradation; glycolysis; D-glyceraldehyde 3-phosphate and glycerone phosphate from D-glucose: step 2/4. Functionally, catalyzes the reversible isomerization of glucose-6-phosphate to fructose-6-phosphate. This chain is Glucose-6-phosphate isomerase, found in Yersinia enterocolitica serotype O:8 / biotype 1B (strain NCTC 13174 / 8081).